A 1505-amino-acid chain; its full sequence is MLRFVTKNSQDKSSDLFSICSDRGTFVAHNRVRTDFKFDNLVFNRVYGVSQKFTLVGNPTVCFNEGSSYLEGIAKKYLTLDGGLAIDNVLNELRSTCGIPGNAVASHAYNITSWRWYDNHVALLMNMLRAYHLQVLTEQGQYSAGDIPMYHDGHVKIKLPVTIDDTAGPTQFAWPSDRSTDSYPDWAQFSESFPSIDVPYLDVRPLTVTEVNFVLMMMSKWHRRTNLAIDYEAPQLADKFAYRHALTVQDADEWIEGDRTDDQFRPPSSKVMLSALRKYVNHNRLYNQFYTAAQLLAQIMMKPVPNCAEGYAWLMHDALVNIPKFGSIRGRYPFLLSGDAALIQATALEDWSAIMAKPELVFTYAMQVSVALNTGLYLRRVKKTGFGTTIDDSYEDGAFLQPETFVQAALACCTGQDAPLNGMSDVYVTYPDLLEFDAVTQVPITVIEPAGYNIVDDHLVVVGVPVACSPYMIFPVAAFDTANPYCGNFVIKAANKYLRKGAVYDKLEAWKLAWALRVAGYDTHFKVYGDTHGLTKFYADNGDTWTHIPEFVTDGDVMEVFVTAIERRARHFVELPRLNSPAFFRSVEVSTTIYDTHVQAGAHAVYHASRINLDYVKPVSTGIQVINAGELKNYWGSVRRTQQGLRSGRSYDASCNAYRRTYSWRCPRRVDRTGGQCFSRVNVIEPSHGPRPTRYILQEPGTYPAWIRFRNRVQAVSRQKATHFLFDIVPAAVISDFTTSDTSSFAYKSHTYAVNVTALRFSDTYALYVQTDTNMTILSPAARRQASATYSQVAGFCYNTPTVMDSLANILDVDRNIRPKHFKGLRLYTRSKVTAQHHTHLRPDELVEAAAKVSPRRKYYLMCVVELLANLQVDLEAAVATILAYVLTLSEKFVPIFLDSRAIWVGEPGPDALTARLKASSGQIKSIHTADYEPLTELFELAVLMNRGVGHVSWQAEKDHRLNPDVAVVDQARLYSCVRDMFEGSKQTYKYPFMTWDDYTANRWEWVPGGSVHSQYEEDNDYIYPGQYTRNKFITVNKMPKHKISRMIASPPEVRAWTSTKYEWGKQRAIYGTDLRSTLITNFAMFRCEDVLTHKFPVGDQAEAAKVHKRVNMMLDGASSFCFDYDDFNSQHSIASMYTVLCAFRDTFSRNMSDEQAEAMNWVCESVRHMWVLDPDTKEWYRLQGTLLSGWRLTTFMNTVLNWAYMKLAGVFDLDDVQDSVHNGDDVMISLNRVSTAVRIMDAMHRINARAQPAKCNLFSISEFLRVEHGMSGGDGLGAQYLSRSCATLVHSRIESNEPLSVVRVMEADQARLRDLANRTRVQSAVTAIKEQLDKRVTKIFGVGDDVVRDIHTAHRVCGGISTDTWAPVETKIITDNEAYEIPYEIDDPSFWPGVNDYAYKVWKNFGERLEFNKIKDAVARGSRSTIALKRKARITSKKNEFANKSEWERTMYKAYKGLAVSYYANLSKFMSIPPMANIEFGQARYAMQAALDSSDPLRALQVIL.

It belongs to the totiviridae RNA-directed RNA polymerase family.

The enzyme catalyses RNA(n) + a ribonucleoside 5'-triphosphate = RNA(n+1) + diphosphate. In terms of biological role, RNA-dependent RNA polymerase which replicates the viral genome. Catalyzes the transcription of fully conservative plus-strand genomic RNAs that are extruded from the virion into the cytoplasm where they function as mRNAs for translation of viral proteins and also as substrates for encapsidation to form new virions. Once encapsidated, the positive strand is converted to dsRNA by the RNA-directed RNA polymerase. Displays ssRNA-binding activity. This chain is Probable RNA-directed RNA polymerase (gag-pol), found in Saccharomyces cerevisiae virus L-A (ScV-L-A).